The following is a 335-amino-acid chain: Biotin synthase (335 aa).

The Radical SAM core domain occupies 46 to 274 (YNIQLASLFS…KSKIRLSAGR (229 aa)). [4Fe-4S] cluster is bound by residues Cys-61, Cys-65, and Cys-68. [2Fe-2S] cluster-binding residues include Cys-105, Cys-137, Cys-197, and Arg-269.

Belongs to the radical SAM superfamily. Biotin synthase family. Homodimer. The cofactor is [4Fe-4S] cluster. Requires [2Fe-2S] cluster as cofactor.

The catalysed reaction is (4R,5S)-dethiobiotin + (sulfur carrier)-SH + 2 reduced [2Fe-2S]-[ferredoxin] + 2 S-adenosyl-L-methionine = (sulfur carrier)-H + biotin + 2 5'-deoxyadenosine + 2 L-methionine + 2 oxidized [2Fe-2S]-[ferredoxin]. The protein operates within cofactor biosynthesis; biotin biosynthesis; biotin from 7,8-diaminononanoate: step 2/2. Its function is as follows. Catalyzes the conversion of dethiobiotin (DTB) to biotin by the insertion of a sulfur atom into dethiobiotin via a radical-based mechanism. This is Biotin synthase from Prochlorococcus marinus (strain AS9601).